The sequence spans 842 residues: Elongation factor 2 (842 aa).

Positions 17 to 253 (TNVRNMSVIA…LWGDSYFNPK (237 aa)) constitute a tr-type G domain. GTP-binding positions include 26–33 (AHVDHGKS), 158–161 (NKVD), and 213–215 (SGL). His699 bears the Diphthamide mark.

The protein belongs to the TRAFAC class translation factor GTPase superfamily. Classic translation factor GTPase family. EF-G/EF-2 subfamily.

It localises to the cytoplasm. It catalyses the reaction GTP + H2O = GDP + phosphate + H(+). Functionally, catalyzes the GTP-dependent ribosomal translocation step during translation elongation. During this step, the ribosome changes from the pre-translocational (PRE) to the post-translocational (POST) state as the newly formed A-site-bound peptidyl-tRNA and P-site-bound deacylated tRNA move to the P and E sites, respectively. Catalyzes the coordinated movement of the two tRNA molecules, the mRNA and conformational changes in the ribosome. The protein is Elongation factor 2 (EFT1) of Eremothecium gossypii (strain ATCC 10895 / CBS 109.51 / FGSC 9923 / NRRL Y-1056) (Yeast).